We begin with the raw amino-acid sequence, 172 residues long: Biogenesis of lysosome-related organelles complex 1 subunit 6 (172 aa).

Over residues 1-10 (MSVPEPPPPD) the composition is skewed to pro residues. Disordered stretches follow at residues 1 to 37 (MSVPEPPPPDGVLTGPSDSLEAGEPTPGLSDTSPDEG) and 141 to 172 (QKRQREELEREQQREKEFEREKQLTAKPAKRT). The stretch at 63 to 167 (DLQRSKRALQ…FEREKQLTAK (105 aa)) forms a coiled coil. The span at 143-164 (RQREELEREQQREKEFEREKQL) shows a compositional bias: basic and acidic residues.

This sequence belongs to the BLOC1S6 family. In terms of assembly, octamer composed of one copy each BLOC1S1, BLOC1S2, BLOC1S3, BLOC1S4, BLOC1S5, BLOC1S6, DTNBP1/BLOC1S7 and SNAPIN/BLOC1S8. Interacts with SNAP47. Homodimer. Component of the biogenesis of lysosome-related organelles complex 1 (BLOC-1) composed of BLOC1S1, BLOC1S2, BLOC1S3, BLOC1S4, BLOC1S5, BLOC1S6, DTNBP1/BLOC1S7 and SNAPIN/BLOC1S8. Interacts with BLOC1S4, BLOC1S5, DTNBP1/BLOC1S7, F-actin, SNAP25 isoform 1 and STX12. In terms of processing, phosphorylated. Expressed in liver, kidney and spleen (at protein level). Ubiquitously expressed, with the highest expression levels observed in brain, heart, liver and kidney.

It is found in the cytoplasm. The protein localises to the membrane. Functionally, component of the BLOC-1 complex, a complex that is required for normal biogenesis of lysosome-related organelles (LRO), such as platelet dense granules and melanosomes. In concert with the AP-3 complex, the BLOC-1 complex is required to target membrane protein cargos into vesicles assembled at cell bodies for delivery into neurites and nerve terminals. The BLOC-1 complex, in association with SNARE proteins, is also proposed to be involved in neurite extension. May play a role in intracellular vesicle trafficking, particularly in the vesicle-docking and fusion process. The chain is Biogenesis of lysosome-related organelles complex 1 subunit 6 (Bloc1s6) from Mus musculus (Mouse).